Here is a 100-residue protein sequence, read N- to C-terminus: MDSRFLLALFLVLLVLGCEVQAAQQLQQDDPGSPALLGKVQESISSYWDTAKAAAQDLYQRTYLTSVDEKLRDMYSKSSAAMTTYAIIFTDQILTLLKGE.

A signal peptide spans 1-22 (MDSRFLLALFLVLLVLGCEVQA). Positions 66–74 (SVDEKLRDM) are lipid binding. The tract at residues 78-100 (SSAAMTTYAIIFTDQILTLLKGE) is lipoprotein lipase cofactor.

Belongs to the apolipoprotein C2 family. Post-translationally, proapolipoprotein C-II is synthesized as a sialic acid containing glycoprotein which is subsequently desialylated prior to its proteolytic processing. In terms of processing, proapolipoprotein C-II, the major form found in plasma undergoes proteolytic cleavage of its N-terminal hexapeptide to generate the mature form apolipoprotein C-II, which occurs as the minor form in plasma.

The protein localises to the secreted. Component of chylomicrons, very low-density lipoproteins (VLDL), low-density lipoproteins (LDL), and high-density lipoproteins (HDL) in plasma. Plays an important role in lipoprotein metabolism as an activator of lipoprotein lipase. The polypeptide is Apolipoprotein C-II (APOC2) (Myodes glareolus (Bank vole)).